The sequence spans 487 residues: Glutamyl-tRNA(Gln) amidotransferase subunit A (487 aa).

Catalysis depends on charge relay system residues lysine 79 and serine 154. Catalysis depends on serine 178, which acts as the Acyl-ester intermediate.

This sequence belongs to the amidase family. GatA subfamily. Heterotrimer of A, B and C subunits.

The catalysed reaction is L-glutamyl-tRNA(Gln) + L-glutamine + ATP + H2O = L-glutaminyl-tRNA(Gln) + L-glutamate + ADP + phosphate + H(+). In terms of biological role, allows the formation of correctly charged Gln-tRNA(Gln) through the transamidation of misacylated Glu-tRNA(Gln) in organisms which lack glutaminyl-tRNA synthetase. The reaction takes place in the presence of glutamine and ATP through an activated gamma-phospho-Glu-tRNA(Gln). This is Glutamyl-tRNA(Gln) amidotransferase subunit A from Heliobacterium modesticaldum (strain ATCC 51547 / Ice1).